Consider the following 162-residue polypeptide: Endoribonuclease YbeY (162 aa).

Zn(2+) is bound by residues histidine 126, histidine 130, and histidine 136.

Belongs to the endoribonuclease YbeY family. Zn(2+) is required as a cofactor.

The protein localises to the cytoplasm. Its function is as follows. Single strand-specific metallo-endoribonuclease involved in late-stage 70S ribosome quality control and in maturation of the 3' terminus of the 16S rRNA. In Fusobacterium nucleatum subsp. nucleatum (strain ATCC 25586 / DSM 15643 / BCRC 10681 / CIP 101130 / JCM 8532 / KCTC 2640 / LMG 13131 / VPI 4355), this protein is Endoribonuclease YbeY.